The sequence spans 463 residues: Fumarate hydratase class II (463 aa).

Residues 98–100 (SGT), 129–132 (HPND), 139–141 (SSN), and threonine 187 each bind substrate. Histidine 188 acts as the Proton donor/acceptor in catalysis. Serine 318 is an active-site residue. Substrate contacts are provided by residues serine 319 and 324-326 (KVN).

Belongs to the class-II fumarase/aspartase family. Fumarase subfamily. As to quaternary structure, homotetramer.

It is found in the cytoplasm. The enzyme catalyses (S)-malate = fumarate + H2O. It functions in the pathway carbohydrate metabolism; tricarboxylic acid cycle; (S)-malate from fumarate: step 1/1. Functionally, involved in the TCA cycle. Catalyzes the stereospecific interconversion of fumarate to L-malate. The protein is Fumarate hydratase class II of Rhizobium meliloti (strain 1021) (Ensifer meliloti).